Consider the following 556-residue polypeptide: CDP-diacylglycerol--glycerol-3-phosphate 3-phosphatidyltransferase, mitochondrial (556 aa).

The N-terminal 28 residues, Met-1 to Ala-28, are a transit peptide targeting the mitochondrion. Ser-49 is modified (phosphoserine). Ala-124–Gly-131 contacts ATP. PLD phosphodiesterase domains follow at residues Thr-215–Tyr-241 and Phe-419–Tyr-457. Active-site residues include His-220, Lys-222, and Asp-227.

Belongs to the CDP-alcohol phosphatidyltransferase class-II family.

Its subcellular location is the mitochondrion. The enzyme catalyses a CDP-1,2-diacyl-sn-glycerol + sn-glycerol 3-phosphate = a 1,2-diacyl-sn-glycero-3-phospho-(1'-sn-glycero-3'-phosphate) + CMP + H(+). It participates in phospholipid metabolism; phosphatidylglycerol biosynthesis; phosphatidylglycerol from CDP-diacylglycerol: step 1/2. With respect to regulation, activated by calcium and magnesium and inhibited by other bivalent cations. Its function is as follows. Functions in the biosynthesis of the anionic phospholipids phosphatidylglycerol and cardiolipin. In Bos taurus (Bovine), this protein is CDP-diacylglycerol--glycerol-3-phosphate 3-phosphatidyltransferase, mitochondrial (PGS1).